A 606-amino-acid polypeptide reads, in one-letter code: Sulfite reductase [NADPH] flavoprotein alpha-component (606 aa).

One can recognise a Flavodoxin-like domain in the interval 64-202; sequence VTLISASQTG…QAQQWRQQVV (139 aa). Residues 70 to 75, 117 to 120, and 153 to 162 contribute to the FMN site; these read SQTGNA, STQG, and LGDTSYEHFC. Positions 212–234 are enriched in low complexity; it reads QSTAPTQSTTPAAAAITSGGTTT. The interval 212–235 is disordered; it reads QSTAPTQSTTPAAAAITSGGTTTV. The region spanning 241–455 is the FAD-binding FR-type domain; sequence TAPLTAQLSV…IEHNDNFRLP (215 aa). Residues Thr-329, Lys-363, 393 to 396, 411 to 413, Tyr-417, and 426 to 429 each bind FAD; these read RLYS, TVG, and GGAS. Residues 526–527, 532–536, and Asp-568 contribute to the NADP(+) site; these read SR and KIYVQ. Tyr-606 serves as a coordination point for FAD.

It belongs to the NADPH-dependent sulphite reductase flavoprotein subunit CysJ family. The protein in the N-terminal section; belongs to the flavodoxin family. This sequence in the C-terminal section; belongs to the flavoprotein pyridine nucleotide cytochrome reductase family. As to quaternary structure, alpha(8)-beta(8). The alpha component is a flavoprotein, the beta component is a hemoprotein. The cofactor is FAD. Requires FMN as cofactor.

The catalysed reaction is hydrogen sulfide + 3 NADP(+) + 3 H2O = sulfite + 3 NADPH + 4 H(+). It participates in sulfur metabolism; hydrogen sulfide biosynthesis; hydrogen sulfide from sulfite (NADPH route): step 1/1. Its function is as follows. Component of the sulfite reductase complex that catalyzes the 6-electron reduction of sulfite to sulfide. This is one of several activities required for the biosynthesis of L-cysteine from sulfate. The flavoprotein component catalyzes the electron flow from NADPH -&gt; FAD -&gt; FMN to the hemoprotein component. The polypeptide is Sulfite reductase [NADPH] flavoprotein alpha-component (Yersinia pestis bv. Antiqua (strain Antiqua)).